A 131-amino-acid polypeptide reads, in one-letter code: Large ribosomal subunit protein bL17 (131 aa).

It belongs to the bacterial ribosomal protein bL17 family. Part of the 50S ribosomal subunit. Contacts protein L32.

The sequence is that of Large ribosomal subunit protein bL17 from Teredinibacter turnerae (strain ATCC 39867 / T7901).